The chain runs to 245 residues: Eukaryotic translation initiation factor 6 (245 aa).

This sequence belongs to the eIF-6 family. As to quaternary structure, monomer. Associates with the 60S ribosomal subunit.

The protein localises to the cytoplasm. Its subcellular location is the nucleus. The protein resides in the nucleolus. Functionally, binds to the 60S ribosomal subunit and prevents its association with the 40S ribosomal subunit to form the 80S initiation complex in the cytoplasm. May also be involved in ribosome biogenesis. This Xenopus laevis (African clawed frog) protein is Eukaryotic translation initiation factor 6 (eif6).